Reading from the N-terminus, the 438-residue chain is Glycerophosphocholine cholinephosphodiesterase ENPP6 (438 aa).

The signal sequence occupies residues methionine 1 to alanine 22. Residues aspartate 32, serine 69, and asparagine 90 each coordinate substrate. Residues aspartate 32 and serine 69 each contribute to the Zn(2+) site. Serine 69 acts as the Nucleophile in catalysis. Position 69 is a phosphoserine (serine 69). A disulfide bridge connects residues cysteine 140 and cysteine 152. The stretch at lysine 162 to asparagine 226 forms a coiled coil. Asparagine 163 carries N-linked (GlcNAc...) asparagine glycosylation. Aspartate 191 contributes to the substrate binding site. 4 residues coordinate Zn(2+): aspartate 191, histidine 195, aspartate 238, and histidine 239. Histidine 239 contributes to the substrate binding site. 3 N-linked (GlcNAc...) asparagine glycosylation sites follow: asparagine 258, asparagine 287, and asparagine 339. Histidine 352 contacts substrate. Histidine 352 is a Zn(2+) binding site. The N-linked (GlcNAc...) asparagine glycan is linked to asparagine 402. Residue serine 415 is the site of GPI-anchor amidated serine attachment. The propeptide at alanine 416 to cysteine 438 is removed in mature form.

Belongs to the nucleotide pyrophosphatase/phosphodiesterase family. Zn(2+) serves as cofactor.

It is found in the cell membrane. The enzyme catalyses sn-glycerol 3-phosphocholine + H2O = phosphocholine + glycerol + H(+). It catalyses the reaction a 1-acyl-sn-glycero-3-phosphocholine + H2O = a 1-acyl-sn-glycerol + phosphocholine + H(+). The catalysed reaction is a 1-O-alkyl-sn-glycero-3-phosphocholine + H2O = a 1-O-alkyl-sn-glycerol + phosphocholine + H(+). It carries out the reaction 1-dodecanoyl-sn-glycero-3-phosphocholine + H2O = 1-dodecanoyl-sn-glycerol + phosphocholine + H(+). The enzyme catalyses 1-hexadecanoyl-sn-glycero-3-phosphocholine + H2O = 1-hexadecanoyl-sn-glycerol + phosphocholine + H(+). It catalyses the reaction 1-(5Z,8Z,11Z,14Z-eicosatetraenoyl)-sn-glycero-3-phosphocholine + H2O = 1-(5Z,8Z,11Z,14Z-eicosatetraenoyl)-sn-glycerol + phosphocholine + H(+). The catalysed reaction is 1-tetradecanoyl-sn-glycero-3-phosphocholine + H2O = 1-tetradecanoyl-sn-glycerol + phosphocholine + H(+). It carries out the reaction sphing-4-enine-phosphocholine + H2O = sphing-4-enine + phosphocholine + H(+). The enzyme catalyses 1-(9Z-octadecenoyl)-sn-glycero-3-phosphocholine + H2O = 1-(9Z-octadecenoyl)-sn-glycerol + phosphocholine + H(+). It catalyses the reaction 1-(9Z,12Z)-octadecadienoyl-sn-glycero-3-phosphocholine + H2O = 1-(9Z,12Z-octadecadienoyl)-sn-glycerol + phosphocholine + H(+). The catalysed reaction is glycero-2-phosphocholine + H2O = phosphocholine + glycerol + H(+). Its function is as follows. Choline-specific glycerophosphodiesterase that hydrolyzes glycerophosphocholine (GPC) and lysophosphatidylcholine (LPC) and contributes to supplying choline to the cells. Has a preference for LPC with short (12:0 and 14:0) or polyunsaturated (18:2 and 20:4) fatty acids. In vitro, hydrolyzes only choline-containing lysophospholipids, such as sphingosylphosphorylcholine (SPC), platelet-activating factor (PAF) and lysoPAF, but not other lysophospholipids. The sequence is that of Glycerophosphocholine cholinephosphodiesterase ENPP6 from Danio rerio (Zebrafish).